We begin with the raw amino-acid sequence, 236 residues long: Ras-related protein RabY (236 aa).

Residue 18–25 (GDRKTGKT) participates in GTP binding. Positions 40 to 48 (YRQTNLLHF) match the Effector region motif. Residues 66 to 70 (DSQAD) and 126 to 129 (NKSD) each bind GTP. Positions 192–225 (QQQQQQQQQQQQQQQQQQQQQQQQQQQQQQQHQQ) are enriched in low complexity. The segment at 192-236 (QQQQQQQQQQQQQQQQQQQQQQQQQQQQQQQHQQSSKTKIGCLIQ) is disordered. C233 is subject to Cysteine methyl ester. C233 carries the S-geranylgeranyl cysteine lipid modification. Positions 234–236 (LIQ) are cleaved as a propeptide — removed in mature form.

It belongs to the small GTPase superfamily. Rab family.

Its subcellular location is the cell membrane. This chain is Ras-related protein RabY (rabY), found in Dictyostelium discoideum (Social amoeba).